A 156-amino-acid chain; its full sequence is Cyclic pyranopterin monophosphate synthase (156 aa).

Residues Leu-75–His-77 and Met-111–Glu-112 each bind substrate. The active site involves Asp-126.

Belongs to the MoaC family. As to quaternary structure, homohexamer; trimer of dimers.

The enzyme catalyses (8S)-3',8-cyclo-7,8-dihydroguanosine 5'-triphosphate = cyclic pyranopterin phosphate + diphosphate. Its pathway is cofactor biosynthesis; molybdopterin biosynthesis. Its function is as follows. Catalyzes the conversion of (8S)-3',8-cyclo-7,8-dihydroguanosine 5'-triphosphate to cyclic pyranopterin monophosphate (cPMP). This Corynebacterium glutamicum (strain ATCC 13032 / DSM 20300 / JCM 1318 / BCRC 11384 / CCUG 27702 / LMG 3730 / NBRC 12168 / NCIMB 10025 / NRRL B-2784 / 534) protein is Cyclic pyranopterin monophosphate synthase.